The sequence spans 179 residues: Adenine phosphoribosyltransferase (179 aa).

This sequence belongs to the purine/pyrimidine phosphoribosyltransferase family. In terms of assembly, homodimer.

The protein localises to the cytoplasm. It carries out the reaction AMP + diphosphate = 5-phospho-alpha-D-ribose 1-diphosphate + adenine. It functions in the pathway purine metabolism; AMP biosynthesis via salvage pathway; AMP from adenine: step 1/1. In terms of biological role, catalyzes a salvage reaction resulting in the formation of AMP, that is energically less costly than de novo synthesis. This chain is Adenine phosphoribosyltransferase, found in Bradyrhizobium sp. (strain BTAi1 / ATCC BAA-1182).